The primary structure comprises 459 residues: UDP-N-acetylmuramate--L-alanine ligase (459 aa).

113–119 (GSHGKTS) serves as a coordination point for ATP.

This sequence belongs to the MurCDEF family.

The protein resides in the cytoplasm. It catalyses the reaction UDP-N-acetyl-alpha-D-muramate + L-alanine + ATP = UDP-N-acetyl-alpha-D-muramoyl-L-alanine + ADP + phosphate + H(+). It functions in the pathway cell wall biogenesis; peptidoglycan biosynthesis. Its function is as follows. Cell wall formation. This chain is UDP-N-acetylmuramate--L-alanine ligase, found in Desulfotalea psychrophila (strain LSv54 / DSM 12343).